Consider the following 78-residue polypeptide: cAMP-dependent protein kinase inhibitor beta (78 aa).

Over residues 1 to 10 (MRTDSSKMTD) the composition is skewed to basic and acidic residues. Residues 1 to 78 (MRTDSSKMTD…QLEKPQNEEK (78 aa)) are disordered. Polar residues predominate over residues 33-42 (IQSSAATDGT). Residues 53 to 78 (SVKEDAKEKDEKTTQDQLEKPQNEEK) are compositionally biased toward basic and acidic residues.

The protein belongs to the PKI family.

In terms of biological role, extremely potent competitive inhibitor of cAMP-dependent protein kinase activity, this protein interacts with the catalytic subunit of the enzyme after the cAMP-induced dissociation of its regulatory chains. The protein is cAMP-dependent protein kinase inhibitor beta (PKIB) of Homo sapiens (Human).